Here is a 47-residue protein sequence, read N- to C-terminus: uncharacterized protein (47 aa).

Residues 22 to 47 (VGPRTKRANQASPPVGRHSSRLMCPG) form a disordered region.

This is an uncharacterized protein from Saccharomyces cerevisiae (strain ATCC 204508 / S288c) (Baker's yeast).